A 257-amino-acid chain; its full sequence is Probable transcriptional regulatory protein SRU_2667 (257 aa).

The span at M1–K15 shows a compositional bias: basic residues. Positions M1–V25 are disordered.

Belongs to the TACO1 family.

The protein localises to the cytoplasm. The polypeptide is Probable transcriptional regulatory protein SRU_2667 (Salinibacter ruber (strain DSM 13855 / M31)).